The chain runs to 503 residues: Cytochrome P450 71B6 (503 aa).

A helical membrane pass occupies residues 10–30 (TELLPWLLLLLIPPLLIFFLL). C446 is a heme binding site.

It belongs to the cytochrome P450 family. It depends on heme as a cofactor.

Its subcellular location is the membrane. The polypeptide is Cytochrome P450 71B6 (CYP71B6) (Arabidopsis thaliana (Mouse-ear cress)).